Here is a 25-residue protein sequence, read N- to C-terminus: Toxin LyeTx 1 (25 aa).

Residue leucine 25 is modified to Leucine amide.

Expressed by the venom gland.

Its subcellular location is the secreted. Its function is as follows. Has antimicrobial activity against Gram-positive bacterium S.aureus (MIC=3.79 uM), Gram-negative bacterium E.coli (MIC=7.81 uM) and yeasts C.krusei (MIC=26.3 uM) and C.neoformans (MIC=13.2 uM). Has hemolytic activity against rabbit erythrocytes. Forms pores in lipid bilayers in vitro; pore formation is reduced when cholesterol is present in the bilayers. The polypeptide is Toxin LyeTx 1 (Lycosa erythrognatha (Wolf spider)).